Consider the following 274-residue polypeptide: Probable glycerophosphodiester phosphodiesterase 1 (274 aa).

A GP-PDE domain is found at 12–264; the sequence is PFVVAHRGAS…HHPGRTKAWL (253 aa). His17 acts as the Proton acceptor in catalysis. Residues Glu44 and Asp46 each contribute to the Ca(2+) site. His59 (proton donor) is an active-site residue. Glu126 lines the Ca(2+) pocket.

The protein belongs to the glycerophosphoryl diester phosphodiesterase family. It depends on Ca(2+) as a cofactor.

The enzyme catalyses a sn-glycero-3-phosphodiester + H2O = an alcohol + sn-glycerol 3-phosphate + H(+). Functionally, glycerophosphodiester phosphodiesterase hydrolyzes glycerophosphodiesters into glycerol-3-phosphate (G3P) and the corresponding alcohol. The protein is Probable glycerophosphodiester phosphodiesterase 1 (glpQ1) of Mycobacterium tuberculosis (strain CDC 1551 / Oshkosh).